The chain runs to 69 residues: Guanine nucleotide-binding protein G(I)/G(S)/G(O) subunit gamma-T2 (69 aa).

The residue at position 66 (Cys-66) is a Cysteine methyl ester. The S-farnesyl cysteine moiety is linked to residue Cys-66. A propeptide spans 67-69 (removed in mature form); the sequence is LIS.

It belongs to the G protein gamma family. G proteins are composed of 3 units, alpha, beta and gamma. In terms of tissue distribution, retinal cones.

It is found in the cell membrane. Its function is as follows. Guanine nucleotide-binding proteins (G proteins) are involved as a modulator or transducer in various transmembrane signaling systems. The beta and gamma chains are required for the GTPase activity, for replacement of GDP by GTP, and for G protein-effector interaction. In Homo sapiens (Human), this protein is Guanine nucleotide-binding protein G(I)/G(S)/G(O) subunit gamma-T2 (GNGT2).